The following is an 888-amino-acid chain: Protein translocase subunit SecA (888 aa).

ATP-binding positions include Gln-81, 99–103 (GEGKT), and Asp-489.

It belongs to the SecA family.

Its subcellular location is the plastid. It is found in the chloroplast stroma. The protein resides in the chloroplast thylakoid membrane. It catalyses the reaction ATP + H2O + cellular proteinSide 1 = ADP + phosphate + cellular proteinSide 2.. Functionally, has a central role in coupling the hydrolysis of ATP to the transfer of proteins across the thylakoid membrane. The sequence is that of Protein translocase subunit SecA from Trieres chinensis (Marine centric diatom).